The chain runs to 119 residues: Large ribosomal subunit protein uL14 (119 aa).

Belongs to the universal ribosomal protein uL14 family. In terms of assembly, part of the 50S ribosomal subunit. Forms a cluster with proteins L3 and L19. In the 70S ribosome, L14 and L19 interact and together make contacts with the 16S rRNA in bridges B5 and B8.

Binds to 23S rRNA. Forms part of two intersubunit bridges in the 70S ribosome. This chain is Large ribosomal subunit protein uL14, found in Ehrlichia canis (strain Jake).